Reading from the N-terminus, the 131-residue chain is Holo-[acyl-carrier-protein] synthase (131 aa).

Asp-8 and Glu-62 together coordinate Mg(2+).

This sequence belongs to the P-Pant transferase superfamily. AcpS family. It depends on Mg(2+) as a cofactor.

The protein localises to the cytoplasm. The catalysed reaction is apo-[ACP] + CoA = holo-[ACP] + adenosine 3',5'-bisphosphate + H(+). In terms of biological role, transfers the 4'-phosphopantetheine moiety from coenzyme A to a Ser of acyl-carrier-protein. This chain is Holo-[acyl-carrier-protein] synthase, found in Delftia acidovorans (strain DSM 14801 / SPH-1).